The sequence spans 249 residues: 2-C-methyl-D-erythritol 4-phosphate cytidylyltransferase (249 aa).

The protein belongs to the IspD/TarI cytidylyltransferase family. IspD subfamily.

It catalyses the reaction 2-C-methyl-D-erythritol 4-phosphate + CTP + H(+) = 4-CDP-2-C-methyl-D-erythritol + diphosphate. It participates in isoprenoid biosynthesis; isopentenyl diphosphate biosynthesis via DXP pathway; isopentenyl diphosphate from 1-deoxy-D-xylulose 5-phosphate: step 2/6. In terms of biological role, catalyzes the formation of 4-diphosphocytidyl-2-C-methyl-D-erythritol from CTP and 2-C-methyl-D-erythritol 4-phosphate (MEP). This Thermobifida fusca (strain YX) protein is 2-C-methyl-D-erythritol 4-phosphate cytidylyltransferase.